A 153-amino-acid polypeptide reads, in one-letter code: MSIELDLQIACENEKDLPSEKDFMSWLNAVLPQFQPQAELTIRIVDEKESHELNHQYRGMDKPTNVLSFPFEAPPEVEIDLLGDLIICRQVVEKEAVEQNKPLLAHWAHMVVHGSLHLLGYDHIEDEEAEEMESLETELMQEMGFEDPYLAEK.

H113, H117, and H123 together coordinate Zn(2+).

The protein belongs to the endoribonuclease YbeY family. Zn(2+) is required as a cofactor.

The protein localises to the cytoplasm. In terms of biological role, single strand-specific metallo-endoribonuclease involved in late-stage 70S ribosome quality control and in maturation of the 3' terminus of the 16S rRNA. The polypeptide is Endoribonuclease YbeY (Aliivibrio salmonicida (strain LFI1238) (Vibrio salmonicida (strain LFI1238))).